The following is a 381-amino-acid chain: 4-hydroxy-3-methylbut-2-en-1-yl diphosphate synthase (flavodoxin) (381 aa).

The [4Fe-4S] cluster site is built by Cys-273, Cys-276, Cys-308, and Glu-315.

It belongs to the IspG family. [4Fe-4S] cluster is required as a cofactor.

It carries out the reaction (2E)-4-hydroxy-3-methylbut-2-enyl diphosphate + oxidized [flavodoxin] + H2O + 2 H(+) = 2-C-methyl-D-erythritol 2,4-cyclic diphosphate + reduced [flavodoxin]. Its pathway is isoprenoid biosynthesis; isopentenyl diphosphate biosynthesis via DXP pathway; isopentenyl diphosphate from 1-deoxy-D-xylulose 5-phosphate: step 5/6. Its function is as follows. Converts 2C-methyl-D-erythritol 2,4-cyclodiphosphate (ME-2,4cPP) into 1-hydroxy-2-methyl-2-(E)-butenyl 4-diphosphate. This Gluconobacter oxydans (strain 621H) (Gluconobacter suboxydans) protein is 4-hydroxy-3-methylbut-2-en-1-yl diphosphate synthase (flavodoxin).